We begin with the raw amino-acid sequence, 89 residues long: UPF0145 protein MJ1170 (89 aa).

The protein belongs to the UPF0145 family. Highly divergent.

The sequence is that of UPF0145 protein MJ1170 from Methanocaldococcus jannaschii (strain ATCC 43067 / DSM 2661 / JAL-1 / JCM 10045 / NBRC 100440) (Methanococcus jannaschii).